The following is a 454-amino-acid chain: Bifunctional protein GlmU (454 aa).

The pyrophosphorylase stretch occupies residues 1–228 (MTLPLHVVIL…PQDVEGANDP (228 aa)). Residues 10-13 (LAAG), Lys24, Gln76, 81-82 (GT), 103-105 (YGD), Gly138, Glu153, Asn168, and Asn226 each bind UDP-N-acetyl-alpha-D-glucosamine. Asp105 contacts Mg(2+). Mg(2+) is bound at residue Asn226. Residues 229 to 249 (WQLAQLERAWQLRAARALSLQ) are linker. Positions 250-454 (GVRMADPARV…IEGWERPTKK (205 aa)) are N-acetyltransferase. UDP-N-acetyl-alpha-D-glucosamine contacts are provided by Arg332 and Lys350. His362 (proton acceptor) is an active-site residue. Residues Tyr365 and Asn376 each contribute to the UDP-N-acetyl-alpha-D-glucosamine site. Acetyl-CoA-binding positions include Ala379, 385-386 (NY), Ser404, Ala422, and Arg439.

In the N-terminal section; belongs to the N-acetylglucosamine-1-phosphate uridyltransferase family. It in the C-terminal section; belongs to the transferase hexapeptide repeat family. As to quaternary structure, homotrimer. Mg(2+) serves as cofactor.

Its subcellular location is the cytoplasm. It catalyses the reaction alpha-D-glucosamine 1-phosphate + acetyl-CoA = N-acetyl-alpha-D-glucosamine 1-phosphate + CoA + H(+). The enzyme catalyses N-acetyl-alpha-D-glucosamine 1-phosphate + UTP + H(+) = UDP-N-acetyl-alpha-D-glucosamine + diphosphate. The protein operates within nucleotide-sugar biosynthesis; UDP-N-acetyl-alpha-D-glucosamine biosynthesis; N-acetyl-alpha-D-glucosamine 1-phosphate from alpha-D-glucosamine 6-phosphate (route II): step 2/2. Its pathway is nucleotide-sugar biosynthesis; UDP-N-acetyl-alpha-D-glucosamine biosynthesis; UDP-N-acetyl-alpha-D-glucosamine from N-acetyl-alpha-D-glucosamine 1-phosphate: step 1/1. It participates in bacterial outer membrane biogenesis; LPS lipid A biosynthesis. In terms of biological role, catalyzes the last two sequential reactions in the de novo biosynthetic pathway for UDP-N-acetylglucosamine (UDP-GlcNAc). The C-terminal domain catalyzes the transfer of acetyl group from acetyl coenzyme A to glucosamine-1-phosphate (GlcN-1-P) to produce N-acetylglucosamine-1-phosphate (GlcNAc-1-P), which is converted into UDP-GlcNAc by the transfer of uridine 5-monophosphate (from uridine 5-triphosphate), a reaction catalyzed by the N-terminal domain. This chain is Bifunctional protein GlmU, found in Xanthomonas oryzae pv. oryzae (strain MAFF 311018).